Consider the following 25-residue polypeptide: Alanine racemase (25 aa).

Belongs to the alanine racemase family. Homodimer. It depends on pyridoxal 5'-phosphate as a cofactor.

The enzyme catalyses L-alanine = D-alanine. It functions in the pathway amino-acid biosynthesis; D-alanine biosynthesis; D-alanine from L-alanine: step 1/1. Its function is as follows. Catalyzes the interconversion of L-alanine and D-alanine. This chain is Alanine racemase, found in Pseudomonas fluorescens.